A 275-amino-acid chain; its full sequence is Elongation factor Ts (275 aa).

The interval 76 to 79 (TDFV) is involved in Mg(2+) ion dislocation from EF-Tu.

This sequence belongs to the EF-Ts family.

It is found in the cytoplasm. Associates with the EF-Tu.GDP complex and induces the exchange of GDP to GTP. It remains bound to the aminoacyl-tRNA.EF-Tu.GTP complex up to the GTP hydrolysis stage on the ribosome. This Rhodococcus jostii (strain RHA1) protein is Elongation factor Ts.